The following is a 138-amino-acid chain: Acidic phospholipase A2 beta (138 aa).

The N-terminal stretch at 1-16 (MRTLWIVAVLLLGVEG) is a signal peptide. Cystine bridges form between Cys-42–Cys-131, Cys-44–Cys-60, Cys-59–Cys-111, Cys-65–Cys-138, Cys-66–Cys-104, Cys-73–Cys-97, and Cys-91–Cys-102. The Ca(2+) site is built by Tyr-43, Gly-45, and Gly-47. The active site involves His-63. Asp-64 is a binding site for Ca(2+). The active site involves Asp-105.

It belongs to the phospholipase A2 family. Group II subfamily. D49 sub-subfamily. Dimer. Ca(2+) is required as a cofactor. As to expression, expressed by the venom gland.

Its subcellular location is the secreted. The enzyme catalyses a 1,2-diacyl-sn-glycero-3-phosphocholine + H2O = a 1-acyl-sn-glycero-3-phosphocholine + a fatty acid + H(+). Its function is as follows. PLA2 catalyzes the calcium-dependent hydrolysis of the 2-acyl groups in 3-sn-phosphoglycerides. The polypeptide is Acidic phospholipase A2 beta (Crotalus adamanteus (Eastern diamondback rattlesnake)).